Consider the following 519-residue polypeptide: 2-isopropylmalate synthase (519 aa).

The Pyruvate carboxyltransferase domain maps to Val5–Ser267. Positions 14, 202, 204, and 238 each coordinate Mn(2+). A regulatory domain region spans residues Lys392–Val519.

Belongs to the alpha-IPM synthase/homocitrate synthase family. LeuA type 1 subfamily. As to quaternary structure, homodimer. Mn(2+) is required as a cofactor.

The protein localises to the cytoplasm. The enzyme catalyses 3-methyl-2-oxobutanoate + acetyl-CoA + H2O = (2S)-2-isopropylmalate + CoA + H(+). Its pathway is amino-acid biosynthesis; L-leucine biosynthesis; L-leucine from 3-methyl-2-oxobutanoate: step 1/4. Catalyzes the condensation of the acetyl group of acetyl-CoA with 3-methyl-2-oxobutanoate (2-ketoisovalerate) to form 3-carboxy-3-hydroxy-4-methylpentanoate (2-isopropylmalate). The polypeptide is 2-isopropylmalate synthase (Pseudoalteromonas atlantica (strain T6c / ATCC BAA-1087)).